A 362-amino-acid chain; its full sequence is GDSL esterase/lipase 6 (362 aa).

Residues 1 to 23 form the signal peptide; sequence MSSSSSMDLLMCLLLLISPVVLA. S38 functions as the Nucleophile in the catalytic mechanism. Residues N50, N103, N107, N195, and N296 are each glycosylated (N-linked (GlcNAc...) asparagine). Residues D323 and H326 contribute to the active site.

The protein belongs to the 'GDSL' lipolytic enzyme family.

The protein localises to the secreted. This chain is GDSL esterase/lipase 6 (GLIP6), found in Arabidopsis thaliana (Mouse-ear cress).